A 116-amino-acid chain; its full sequence is Endocuticle structural glycoprotein SgAbd-4 (116 aa).

Position 1 is a pyrrolidone carboxylic acid (Gln-1). One can recognise a Chitin-binding type R&amp;R domain in the interval 20–92 (DGSYQWNYET…PQGAHFPTPP (73 aa)). O-linked (HexNAc...) threonine glycosylation is found at Thr-90 and Thr-107. A glycan (O-linked (HexNAc...) serine) is linked at Ser-110. Thr-111 carries O-linked (HexNAc...) threonine glycosylation. Residue Pro-116 is modified to Proline amide.

Component of the abdominal endocuticle. This Schistocerca gregaria (Desert locust) protein is Endocuticle structural glycoprotein SgAbd-4.